Reading from the N-terminus, the 118-residue chain is Developmental pluripotency-associated protein 5A (118 aa).

The KH; atypical domain occupies 24 to 86; the sequence is PEVFQVQSLV…NNKIRAKWML (63 aa).

The protein belongs to the KHDC1 family.

It is found in the cytoplasm. In terms of biological role, involved in the maintenance of embryonic stem (ES) cell pluripotency. Dispensable for self-renewal of pluripotent ES cells and establishment of germ cells. Associates with specific target mRNAs. This is Developmental pluripotency-associated protein 5A (Dppa5a) from Mus musculus (Mouse).